The following is a 437-amino-acid chain: Adenylosuccinate lyase (437 aa).

N(6)-(1,2-dicarboxyethyl)-AMP-binding positions include 4 to 5, 70 to 72, and 96 to 97; these read RY, KHD, and TS. The active-site Proton donor/acceptor is H144. Q215 serves as a coordination point for N(6)-(1,2-dicarboxyethyl)-AMP. Residue S265 is the Proton donor/acceptor of the active site. N(6)-(1,2-dicarboxyethyl)-AMP-binding positions include S266, 271-273, and 310-314; these read KKN and SVERV.

Belongs to the lyase 1 family. Adenylosuccinate lyase subfamily. Homooligomer. Residues from neighboring subunits contribute catalytic and substrate-binding residues to each active site.

It catalyses the reaction N(6)-(1,2-dicarboxyethyl)-AMP = fumarate + AMP. It carries out the reaction (2S)-2-[5-amino-1-(5-phospho-beta-D-ribosyl)imidazole-4-carboxamido]succinate = 5-amino-1-(5-phospho-beta-D-ribosyl)imidazole-4-carboxamide + fumarate. Its pathway is purine metabolism; AMP biosynthesis via de novo pathway; AMP from IMP: step 2/2. It participates in purine metabolism; IMP biosynthesis via de novo pathway; 5-amino-1-(5-phospho-D-ribosyl)imidazole-4-carboxamide from 5-amino-1-(5-phospho-D-ribosyl)imidazole-4-carboxylate: step 2/2. Catalyzes two reactions in de novo purine nucleotide biosynthesis. Catalyzes the breakdown of 5-aminoimidazole- (N-succinylocarboxamide) ribotide (SAICAR or 2-[5-amino-1-(5-phospho-beta-D-ribosyl)imidazole-4-carboxamido]succinate) to 5-aminoimidazole-4-carboxamide ribotide (AICAR or 5-amino-1-(5-phospho-beta-D-ribosyl)imidazole-4-carboxamide) and fumarate, and of adenylosuccinate (ADS or N(6)-(1,2-dicarboxyethyl)-AMP) to adenosine monophosphate (AMP) and fumarate. This Aquifex aeolicus (strain VF5) protein is Adenylosuccinate lyase (purB).